The chain runs to 295 residues: Cyclin-G1 (295 aa).

Belongs to the cyclin family. Cyclin G subfamily.

Its subcellular location is the nucleus. Functionally, may play a role in growth regulation. Is associated with G2/M phase arrest in response to DNA damage. May be an intermediate by which p53 mediates its role as an inhibitor of cellular proliferation. The polypeptide is Cyclin-G1 (CCNG1) (Bos taurus (Bovine)).